The following is a 236-amino-acid chain: Purine nucleoside phosphorylase (236 aa).

Position 5 (His-5) interacts with a purine D-ribonucleoside. Residues Gly-21, Arg-25, Arg-43, and 86–89 (RYGT) each bind phosphate. Residues Glu-163, 180-182 (EME), and 204-205 (SD) each bind a purine D-ribonucleoside.

It belongs to the PNP/UDP phosphorylase family. In terms of assembly, homohexamer; disulfide-linked. Trimer of homodimers, with three symmetric intersubunit disulfide bonds linking the dimers to one another.

It carries out the reaction S-methyl-5'-thioadenosine + phosphate = 5-(methylsulfanyl)-alpha-D-ribose 1-phosphate + adenine. The enzyme catalyses a purine D-ribonucleoside + phosphate = a purine nucleobase + alpha-D-ribose 1-phosphate. The catalysed reaction is a purine 2'-deoxy-D-ribonucleoside + phosphate = a purine nucleobase + 2-deoxy-alpha-D-ribose 1-phosphate. Its pathway is purine metabolism; purine nucleoside salvage. In terms of biological role, cleavage of guanosine or inosine to respective bases and sugar-1-phosphate molecules. Cleaves inosine, guanosine, and adenosine with a better efficiency than MTA. In Saccharolobus solfataricus (strain ATCC 35092 / DSM 1617 / JCM 11322 / P2) (Sulfolobus solfataricus), this protein is Purine nucleoside phosphorylase.